The primary structure comprises 91 residues: Small ribosomal subunit protein uS19 (91 aa).

Belongs to the universal ribosomal protein uS19 family.

In terms of biological role, protein S19 forms a complex with S13 that binds strongly to the 16S ribosomal RNA. In Bordetella petrii (strain ATCC BAA-461 / DSM 12804 / CCUG 43448), this protein is Small ribosomal subunit protein uS19.